The sequence spans 56 residues: Large ribosomal subunit protein bL33 (56 aa).

Belongs to the bacterial ribosomal protein bL33 family.

The polypeptide is Large ribosomal subunit protein bL33 (Dichelobacter nodosus (strain VCS1703A)).